A 160-amino-acid polypeptide reads, in one-letter code: Ureidoglycolate lyase (160 aa).

It belongs to the ureidoglycolate lyase family. In terms of assembly, homodimer. Requires Ni(2+) as cofactor.

The catalysed reaction is (S)-ureidoglycolate = urea + glyoxylate. Its pathway is nitrogen metabolism; (S)-allantoin degradation. Its function is as follows. Catalyzes the catabolism of the allantoin degradation intermediate (S)-ureidoglycolate, generating urea and glyoxylate. Involved in the utilization of allantoin as nitrogen source. This is Ureidoglycolate lyase from Salmonella typhimurium (strain LT2 / SGSC1412 / ATCC 700720).